A 174-amino-acid chain; its full sequence is Phospholipase A2-like protein Y52B11A.8 (174 aa).

Positions 1-18 (MRGLLVATWIFVSVAASA) are cleaved as a signal peptide. 2 N-linked (GlcNAc...) asparagine glycosylation sites follow: asparagine 49 and asparagine 143. Residues 137–174 (YEASGPNASTTEESPAEKDDYDYESHVAGLNATPSSST) are disordered.

Belongs to the phospholipase A2 family.

It is found in the secreted. This chain is Phospholipase A2-like protein Y52B11A.8, found in Caenorhabditis elegans.